The sequence spans 291 residues: UPF0276 protein VV1_0952 (291 aa).

Belongs to the UPF0276 family.

The sequence is that of UPF0276 protein VV1_0952 from Vibrio vulnificus (strain CMCP6).